Consider the following 500-residue polypeptide: NAD(P)H-quinone oxidoreductase chain 4, chloroplastic (500 aa).

14 helical membrane passes run 4-24 (FPWLTIIVVFPISAGSLMLFL), 35-55 (YTICICILELLITTYAFCYNF), 87-107 (IGTILLTGFITTLATLAAFPV), 113-130 (LFHFLMLAMYSGQIGSFS), 134-154 (LLLFFIMWELELIPVYLLLSM), 167-187 (FILYTAGSSIFLLIGVLGISL), 211-231 (ILFYIGFVIALTVKSPIIPLH), 242-262 (HYSTCMLLAGILLKMGAYGLV), 272-292 (AHSLFSPWLMAVGTIQIIYAA), 305-325 (IAYSSVSHMGFIIIGIGSITD), 330-350 (GAILQIISHGFIGAALFFLAG), 386-406 (LALPGMSGFVAELIVFFGIIT), 416-436 (ILIIFVMAIGIILTPIYLLSM), and 462-482 (LFLSISILLPIIGIGIYPDFV).

The protein belongs to the complex I subunit 4 family.

It localises to the plastid. It is found in the chloroplast thylakoid membrane. It carries out the reaction a plastoquinone + NADH + (n+1) H(+)(in) = a plastoquinol + NAD(+) + n H(+)(out). It catalyses the reaction a plastoquinone + NADPH + (n+1) H(+)(in) = a plastoquinol + NADP(+) + n H(+)(out). This is NAD(P)H-quinone oxidoreductase chain 4, chloroplastic from Draba nemorosa (Woodland whitlowgrass).